The chain runs to 363 residues: Replication factor C subunit 4 (363 aa).

At M1 the chain carries N-acetylmethionine. Positions 1 to 36 (MQAFLKGTSISTKPPLTKDRGVAASAGSSGENKKAK) are disordered. N6-acetyllysine occurs at positions 6 and 13. 78–85 (GPPGTGKT) is a binding site for ATP.

It belongs to the activator 1 small subunits family. In terms of assembly, subunit of the RFC complex, an heteropentameric complex consisting of a large subunit RFC1 and four small subunits RFC2, RFC3, RFC4 and RFC5; the RFC complex interacts with PCNA. Forms an heterotetrameric complex with RFC2, RFC3 and RFC5; this complex has ATPase activity but is not stimulated by PCNA. The heterotetramer of subunits RFC2, RFC3, RFC4 and RFC5 interacts with RAD17. Interacts with ATAD5. Interacts with CTF18. Interacts with CNTD1; this interaction facilitates crossover formation.

Its subcellular location is the nucleus. In terms of biological role, subunit of the replication factor C (RFC) complex which acts during elongation of primed DNA templates by DNA polymerases delta and epsilon, and is necessary for ATP-dependent loading of proliferating cell nuclear antigen (PCNA) onto primed DNA. The RFC4 subunit probably functions as a scaffold on which the other complex components can assemble. In Homo sapiens (Human), this protein is Replication factor C subunit 4 (RFC4).